The sequence spans 484 residues: MDYNMDYAPHEVISQQGERFVDKYVDRKILKNKKSLLVIISLSVLSVVGFVLFYFTPNSRKSDLFKNSSVENNNDDYIINSLLKSPNGKKFIVSKIDEALSFYDSKKNDINKYNEGNNNNNADFKGLSLFKENTPSNNFIHNKDYFINFFDNKFLMNNAEHINQFYMFIKTNNKQYNSPNEMKERFQVFLQNAHKVNMHNNNKNSLYKKELNRFADLTYHEFKNKYLSLRSSKPLKNSKYLLDQMNYEEVIKKYKGNENFDHAAYDWRLHSGVTPVKDQKNCGSCWAFSSIGSVESQYAIRKNKLITLSEQELVDCSFKNYGCNGGLINNAFEDMIELGGICTDDDYPYVSDAPNLCNIDRCTEKYGIKNYLSVPDNKLKEALRFLGPISISVAVSDDFAFYKEGIFDGECGDQLNHAVMLVGFGMKEIVNPLTKKGEKHYYYIIKNSWGQQWGERGFINIETDESGLMRKCGLGTDAFIPLIE.

Over 1–35 (MDYNMDYAPHEVISQQGERFVDKYVDRKILKNKKS) the chain is Cytoplasmic. The propeptide at 1-243 (MDYNMDYAPH…PLKNSKYLLD (243 aa)) is activation peptide. The Bipartite vacuolar targeting signal 1 motif lies at 16–25 (QGERFVDKYV). Residues 36–56 (LLVIISLSVLSVVGFVLFYFT) form a helical; Signal-anchor for type II membrane protein membrane-spanning segment. Residues 57 to 484 (PNSRKSDLFK…GTDAFIPLIE (428 aa)) are Lumenal-facing. Asn67 carries N-linked (GlcNAc...) asparagine glycosylation. A Bipartite vacuolar targeting signal 2 motif is present at residues 84–105 (KSPNGKKFIVSKIDEALSFYDS). A Nose motif; required for the correct folding of the mature form motif is present at residues 244 to 260 (QMNYEEVIKKYKGNENF). 4 disulfide bridges follow: Cys282–Cys323, Cys316–Cys357, Cys342–Cys362, and Cys411–Cys472. Cys285 is an active-site residue. Residue His417 is part of the active site. Positions 428 to 437 (EIVNPLTKKG) match the Arm motif; binds to host hemoglobin and required for the inhibitory interaction between the propeptide and the catalytic domain motif. Asn447 is an active-site residue.

Belongs to the peptidase C1 family. As to quaternary structure, component of the hemozoin formation complex (HFC) composed of falcipains FP2A and/or FP2B, plasmepsins PMII, PMIII/HAP and PMIV, heme detoxifying protein HDP and falcilysin FLN. The HFC complex is involved in hemoglobin degradation and detoxification of heme in the food vacuole during the asexual blood stage. Auto-cleaved to remove the propeptide.

Its subcellular location is the vacuole. It localises to the membrane. Its activity is regulated as follows. Inhibited by cysteine protease inhibitor ICP. Inhibited by heme and heme analogs. Its function is as follows. Cysteine protease which cleaves native host hemoglobin and globin in the food vacuole during the asexual blood stage. The binding to host hemoglobin is pH-sensitive and only occurs at acidic pH. Cleaves ankyrin and protein 4.1, two components of host erythrocyte membrane cytoskeleton required for the stability of the erythrocyte membrane, and thus may be involved in parasite release. Preferentially cleaves substrates which have an arginine or lysine at the P1 position and a leucine or phenylalanine at the P2 position. In Plasmodium falciparum (isolate 3D7), this protein is Falcipain-2a.